A 233-amino-acid polypeptide reads, in one-letter code: CVAQTSEWEQEGSTNAVLEGESDPEGAVSWGSETQVSDEGGVEGGQGFSEPPEEAKLFVGNLPYDVDSEKLAGIFDAAGVVEIAEVIYNRETDRSRGFGFVTMSTVEEAEKAVELLNGYDMDGRQLTVNKAAPRGSPERAPRGDFEPSCRVYVGNLPWDVDTSRLEQLFSEHGKVVSARVVSDRETGRSRGFGFVTMSSESEVNDAIAALDGQTLDGRAVRVNVAEERPRRAF.

The span at 1–16 shows a compositional bias: polar residues; it reads CVAQTSEWEQEGSTNA. Residues 1–52 form a disordered region; the sequence is CVAQTSEWEQEGSTNAVLEGESDPEGAVSWGSETQVSDEGGVEGGQGFSEPP. RRM domains are found at residues 55 to 133 and 149 to 227; these read AKLF…KAAP and CRVY…VAEE.

The protein localises to the plastid. It is found in the chloroplast. Functionally, probably involved in the 3'-end processing of chloroplast mRNA's. This chain is 28 kDa ribonucleoprotein, chloroplastic, found in Spinacia oleracea (Spinach).